A 157-amino-acid chain; its full sequence is Ribosome maturation factor RimP (157 aa).

It belongs to the RimP family.

The protein resides in the cytoplasm. Functionally, required for maturation of 30S ribosomal subunits. The polypeptide is Ribosome maturation factor RimP (Levilactobacillus brevis (strain ATCC 367 / BCRC 12310 / CIP 105137 / JCM 1170 / LMG 11437 / NCIMB 947 / NCTC 947) (Lactobacillus brevis)).